Reading from the N-terminus, the 170-residue chain is Co-chaperone protein HscB homolog (170 aa).

Residues 5 to 79 (DHFSLFGLPA…RARYLCEQAG (75 aa)) enclose the J domain.

It belongs to the HscB family. As to quaternary structure, interacts with HscA and stimulates its ATPase activity.

In terms of biological role, co-chaperone involved in the maturation of iron-sulfur cluster-containing proteins. Seems to help targeting proteins to be folded toward HscA. The sequence is that of Co-chaperone protein HscB homolog from Bordetella petrii (strain ATCC BAA-461 / DSM 12804 / CCUG 43448).